Consider the following 423-residue polypeptide: UDP-N-acetylgalactosamine-undecaprenyl-phosphate N-acetylgalactosaminephosphotransferase (423 aa).

Residues 1-13 (MSYQRRHSRWYER) are Extracellular-facing. The helical transmembrane segment at 14–34 (VLFSPPSLFFLGAMLAVCLPA) threads the bilayer. The Cytoplasmic portion of the chain corresponds to 35–47 (LERWGWGFWEYFD). Residues 48-68 (AVRVNTLGGAFVAFLLTGIVL) traverse the membrane as a helical segment. Topologically, residues 69–79 (YRFLRYPGASP) are extracellular. Residues 80 to 100 (VAYMIPTVTTLYGSLVGALFF) traverse the membrane as a helical segment. The Cytoplasmic portion of the chain corresponds to 101 to 107 (LRLPYSR). The helical transmembrane segment at 108–128 (QVLFESYVVALLCCWVVYFIG) threads the bilayer. The Extracellular portion of the chain corresponds to 129 to 239 (RRYRTPKYAL…IYAFIKRGMD (111 aa)). Residues 240–260 (ILAAVIAIPLFSPLMLATAVL) form a helical membrane-spanning segment. The Cytoplasmic portion of the chain corresponds to 261-423 (IKLESPGPVM…RTILTGFGAR (163 aa)).

It belongs to the bacterial sugar transferase family.

The protein resides in the membrane. It carries out the reaction di-trans,octa-cis-undecaprenyl phosphate + UDP-N-acetyl-alpha-D-galactosamine = N-acetyl-alpha-D-galactosaminyl-di-trans,octa-cis-undecaprenyl diphosphate + UMP. It functions in the pathway bacterial outer membrane biogenesis; LPS O-antigen biosynthesis. Its function is as follows. Transfers N-acetyl-galactosamine (GalNAc) to undecaprenyl phosphate, a step in the assembly of the repeating-unit of the O-antigen. Shows no activity with UDP-N-acetyl-alpha-D-glucosamine. The sequence is that of UDP-N-acetylgalactosamine-undecaprenyl-phosphate N-acetylgalactosaminephosphotransferase (wecA) from Aeromonas hydrophila.